Reading from the N-terminus, the 252-residue chain is Type III pantothenate kinase (252 aa).

6 to 13 contacts ATP; that stretch reads DVGNTHTT. Substrate is bound at residue 104 to 107; the sequence is GADR. Asp-106 serves as the catalytic Proton acceptor. Asp-126 is a K(+) binding site. Thr-129 contributes to the ATP binding site. Thr-180 lines the substrate pocket.

Belongs to the type III pantothenate kinase family. In terms of assembly, homodimer. The cofactor is NH4(+). K(+) serves as cofactor.

The protein localises to the cytoplasm. It carries out the reaction (R)-pantothenate + ATP = (R)-4'-phosphopantothenate + ADP + H(+). It functions in the pathway cofactor biosynthesis; coenzyme A biosynthesis; CoA from (R)-pantothenate: step 1/5. Catalyzes the phosphorylation of pantothenate (Pan), the first step in CoA biosynthesis. In Fervidobacterium nodosum (strain ATCC 35602 / DSM 5306 / Rt17-B1), this protein is Type III pantothenate kinase.